A 514-amino-acid chain; its full sequence is Multifunctional alkaline phosphatase superfamily protein PehA (514 aa).

4 residues coordinate Mn(2+): Asp-12, Cys-57, Asp-324, and His-325. The active-site Nucleophile is the Cys-57. Position 57 is a 3-oxoalanine (Cys) (Cys-57).

Belongs to the alkaline phosphatase superfamily. In terms of assembly, homotetramer. Mn(2+) serves as cofactor. Post-translationally, the conversion to 3-oxoalanine (also known as C-formylglycine, FGly), of a serine or cysteine residue in prokaryotes and of a cysteine residue in eukaryotes, is critical for catalytic activity. Phosphate triester hydrolytic activity is retained with unmodified cysteine acting as a nucleophile.

Its activity is regulated as follows. Anions including Cl(-) and CH3COO(-), and SO4(2-) salts stimulate activity 20-40% at 100 mM. Hydrolytic enzyme with a broad substrate specificity acting on phosphate diesters and phosphonate monoesters. Hydrolyzes phosphate mono- and triesters, sulfate monoesters and sulfonate monoesters. Hydrolyzes glyphosate monoesters. Does not hydrolyze DNA or cGMP. Hydrolyzes glyceryl glyphosate, but this substrate has a much lower affinity than the glyphosate monoesters. The protein is Multifunctional alkaline phosphatase superfamily protein PehA of Trinickia caryophylli (Paraburkholderia caryophylli).